The sequence spans 401 residues: Bone morphogenetic protein 4 (401 aa).

An N-terminal signal peptide occupies residues 1-19 (MIPGNRMLMVILLSQVLLG). Positions 20–287 (GTNYASLIPD…GHALTRRSKR (268 aa)) are excised as a propeptide. Residues Asn141, Asn204, and Asn238 are each glycosylated (N-linked (GlcNAc...) asparagine). The interval 279 to 299 (HALTRRSKRSPKQQRPRKKNK) is disordered. The span at 280–299 (ALTRRSKRSPKQQRPRKKNK) shows a compositional bias: basic residues. 3 cysteine pairs are disulfide-bonded: Cys301-Cys366, Cys330-Cys398, and Cys334-Cys400. N-linked (GlcNAc...) asparagine glycosylation is found at Asn343 and Asn358.

It belongs to the TGF-beta family. As to quaternary structure, homodimer; disulfide-linked. Forms heterodimers with the TGF-beta family member derriere. Part of a complex consisting of twsg1 and chrd. Interacts with tsku.

Its subcellular location is the secreted. It localises to the extracellular space. The protein localises to the extracellular matrix. In terms of biological role, posterior-ventralizing factor in Xenopus mesoderm induction. Induces posteroventral mesoderm and counteracts dorsalizing signals such as activin. The chain is Bone morphogenetic protein 4 (bmp4) from Xenopus laevis (African clawed frog).